The primary structure comprises 290 residues: uncharacterized protein (290 aa).

The Schiff-base intermediate with substrate role is filled by K203.

It belongs to the DeoC/FbaB aldolase family.

This is an uncharacterized protein from Pasteurella multocida (strain Pm70).